The primary structure comprises 100 residues: Urease subunit gamma (100 aa).

The protein belongs to the urease gamma subunit family. Heterotrimer of UreA (gamma), UreB (beta) and UreC (alpha) subunits. Three heterotrimers associate to form the active enzyme.

The protein resides in the cytoplasm. It catalyses the reaction urea + 2 H2O + H(+) = hydrogencarbonate + 2 NH4(+). Its pathway is nitrogen metabolism; urea degradation; CO(2) and NH(3) from urea (urease route): step 1/1. This chain is Urease subunit gamma, found in Chelativorans sp. (strain BNC1).